A 356-amino-acid chain; its full sequence is Glutamine synthetase cytosolic isozyme 1-4 (356 aa).

Position 2 is an N-acetylserine (Ser2). Residues Ser2 and Ser48 each carry the phosphoserine modification. Residues 19 to 99 (IIAEYIWIGG…VMCDAYTPAG (81 aa)) enclose the GS beta-grasp domain. Positions 37–66 (ARTLPGPVTDPSQLPKWNYDGSSTGQAPGD) are disordered. The GS catalytic domain maps to 106–356 (KRHAAAKIFE…IAESTILWKP (251 aa)).

It belongs to the glutamine synthetase family. In terms of assembly, homooctamer. Interacts with GRF3. Expressed in the pericycle in the region of lateral root emergence.

The protein localises to the cytoplasm. It catalyses the reaction L-glutamate + NH4(+) + ATP = L-glutamine + ADP + phosphate + H(+). In terms of biological role, high-affinity glutamine synthetase. May contribute to the homeostatic control of glutamine synthesis in roots. This Arabidopsis thaliana (Mouse-ear cress) protein is Glutamine synthetase cytosolic isozyme 1-4.